Here is a 465-residue protein sequence, read N- to C-terminus: ATP synthase subunit beta (465 aa).

155-162 is a binding site for ATP; sequence GGAGVGKT.

This sequence belongs to the ATPase alpha/beta chains family. As to quaternary structure, F-type ATPases have 2 components, CF(1) - the catalytic core - and CF(0) - the membrane proton channel. CF(1) has five subunits: alpha(3), beta(3), gamma(1), delta(1), epsilon(1). CF(0) has three main subunits: a(1), b(2) and c(9-12). The alpha and beta chains form an alternating ring which encloses part of the gamma chain. CF(1) is attached to CF(0) by a central stalk formed by the gamma and epsilon chains, while a peripheral stalk is formed by the delta and b chains.

It localises to the cell membrane. The enzyme catalyses ATP + H2O + 4 H(+)(in) = ADP + phosphate + 5 H(+)(out). Its function is as follows. Produces ATP from ADP in the presence of a proton gradient across the membrane. The catalytic sites are hosted primarily by the beta subunits. The polypeptide is ATP synthase subunit beta (Buchnera aphidicola subsp. Acyrthosiphon pisum (strain 5A)).